Here is a 184-residue protein sequence, read N- to C-terminus: ATP synthase subunit b, chloroplastic (184 aa).

Residues 27-49 (LATNPINLSVVLGVLIFFGKGVL) traverse the membrane as a helical segment.

This sequence belongs to the ATPase B chain family. In terms of assembly, F-type ATPases have 2 components, F(1) - the catalytic core - and F(0) - the membrane proton channel. F(1) has five subunits: alpha(3), beta(3), gamma(1), delta(1), epsilon(1). F(0) has four main subunits: a(1), b(1), b'(1) and c(10-14). The alpha and beta chains form an alternating ring which encloses part of the gamma chain. F(1) is attached to F(0) by a central stalk formed by the gamma and epsilon chains, while a peripheral stalk is formed by the delta, b and b' chains.

The protein localises to the plastid. The protein resides in the chloroplast thylakoid membrane. Its function is as follows. F(1)F(0) ATP synthase produces ATP from ADP in the presence of a proton or sodium gradient. F-type ATPases consist of two structural domains, F(1) containing the extramembraneous catalytic core and F(0) containing the membrane proton channel, linked together by a central stalk and a peripheral stalk. During catalysis, ATP synthesis in the catalytic domain of F(1) is coupled via a rotary mechanism of the central stalk subunits to proton translocation. In terms of biological role, component of the F(0) channel, it forms part of the peripheral stalk, linking F(1) to F(0). This is ATP synthase subunit b, chloroplastic from Oenothera argillicola (Appalachian evening primrose).